The sequence spans 540 residues: Early growth response protein 1 (540 aa).

Disordered regions lie at residues 1-105 (MAAA…AESF) and 162-240 (VSMT…PAYP). The segment covering 64 to 75 (SSGGGGGGGGGS) has biased composition (gly residues). Residues 167-190 (PPATSSSASSPAASSSASQSPPLS) are compositionally biased toward low complexity. Over residues 192 to 201 (AVQSNDSSPI) the composition is skewed to polar residues. Residue lysine 304 forms a Glycyl lysine isopeptide (Lys-Gly) (interchain with G-Cter in SUMO2) linkage. Positions 317–337 (PSRMRKYPNRPSKTPPHERPY) are disordered. A C2H2-type 1 zinc finger spans residues 337-361 (YACPVESCDRRFSRSDELTRHIRIH). The C2H2-type 2; degenerate zinc-finger motif lies at 366–388 (PQCRISMRNFSRSDHLTTHIRTH). The C2H2-type 3 zinc finger occupies 394–416 (FACDICGRKFARSDERKRHTKIH). Positions 407 to 482 (DERKRHTKIH…SPGSSTYPSP (76 aa)) are disordered. A compositionally biased stretch (basic residues) spans 411 to 421 (RHTKIHLRQKD). Positions 427-482 (SAASAATSSLPSYPSPVATSYPSPATTSYPSPATTSYPSPVPTSYSSPGSSTYPSP) are enriched in low complexity.

This sequence belongs to the EGR C2H2-type zinc-finger protein family. Interacts with SNAI1 and SP1 upon 12-O-tetradecanoylphorbol-13-acetate (TPA) induction.

The protein localises to the nucleus. It localises to the cytoplasm. Transcriptional regulator. Recognizes and binds to the DNA sequence 5'-GCG(T/G)GGGCG-3'(EGR-site) in the promoter region of target genes. Binds double-stranded target DNA, irrespective of the cytosine methylation status. Regulates the transcription of numerous target genes, and thereby plays an important role in regulating the response to growth factors, DNA damage, and ischemia. Plays a role in the regulation of cell survival, proliferation and cell death. Activates expression of p53/TP53 and TGFB1, and thereby helps prevent tumor formation. Required for normal progress through mitosis and normal proliferation of hepatocytes after partial hepatectomy. Mediates responses to ischemia and hypoxia; regulates the expression of proteins such as IL1B and CXCL2 that are involved in inflammatory processes and development of tissue damage after ischemia. Regulates biosynthesis of luteinizing hormone (LHB) in the pituitary. Regulates the amplitude of the expression rhythms of clock genes: BMAL1, PER2 and NR1D1 in the liver via the activation of PER1 (clock repressor) transcription. Regulates the rhythmic expression of core-clock gene BMAL1 in the suprachiasmatic nucleus (SCN). The chain is Early growth response protein 1 (EGR1) from Bos taurus (Bovine).